Reading from the N-terminus, the 604-residue chain is Proline--tRNA ligase (604 aa).

This sequence belongs to the class-II aminoacyl-tRNA synthetase family. ProS type 1 subfamily. In terms of assembly, homodimer.

The protein localises to the cytoplasm. It catalyses the reaction tRNA(Pro) + L-proline + ATP = L-prolyl-tRNA(Pro) + AMP + diphosphate. Catalyzes the attachment of proline to tRNA(Pro) in a two-step reaction: proline is first activated by ATP to form Pro-AMP and then transferred to the acceptor end of tRNA(Pro). As ProRS can inadvertently accommodate and process non-cognate amino acids such as alanine and cysteine, to avoid such errors it has two additional distinct editing activities against alanine. One activity is designated as 'pretransfer' editing and involves the tRNA(Pro)-independent hydrolysis of activated Ala-AMP. The other activity is designated 'posttransfer' editing and involves deacylation of mischarged Ala-tRNA(Pro). The misacylated Cys-tRNA(Pro) is not edited by ProRS. The polypeptide is Proline--tRNA ligase (Nostoc punctiforme (strain ATCC 29133 / PCC 73102)).